We begin with the raw amino-acid sequence, 657 residues long: 1-deoxy-D-xylulose-5-phosphate synthase (657 aa).

Thiamine diphosphate is bound by residues His73 and 113-115 (SHA). Asp145 contacts Mg(2+). Residues 146-147 (GA), Asn175, Tyr293, and Glu375 contribute to the thiamine diphosphate site. Asn175 contributes to the Mg(2+) binding site.

It belongs to the transketolase family. DXPS subfamily. Homodimer. Mg(2+) is required as a cofactor. Thiamine diphosphate serves as cofactor.

It carries out the reaction D-glyceraldehyde 3-phosphate + pyruvate + H(+) = 1-deoxy-D-xylulose 5-phosphate + CO2. Its pathway is metabolic intermediate biosynthesis; 1-deoxy-D-xylulose 5-phosphate biosynthesis; 1-deoxy-D-xylulose 5-phosphate from D-glyceraldehyde 3-phosphate and pyruvate: step 1/1. Functionally, catalyzes the acyloin condensation reaction between C atoms 2 and 3 of pyruvate and glyceraldehyde 3-phosphate to yield 1-deoxy-D-xylulose-5-phosphate (DXP). The sequence is that of 1-deoxy-D-xylulose-5-phosphate synthase from Pseudarthrobacter chlorophenolicus (strain ATCC 700700 / DSM 12829 / CIP 107037 / JCM 12360 / KCTC 9906 / NCIMB 13794 / A6) (Arthrobacter chlorophenolicus).